Consider the following 425-residue polypeptide: Serine--tRNA ligase (425 aa).

Position 233–235 (233–235 (TAE)) interacts with L-serine. 264–266 (RAE) contacts ATP. Residue Glu287 coordinates L-serine. 351–354 (EISS) lines the ATP pocket. Ser387 contacts L-serine.

The protein belongs to the class-II aminoacyl-tRNA synthetase family. Type-1 seryl-tRNA synthetase subfamily. Homodimer. The tRNA molecule binds across the dimer.

Its subcellular location is the cytoplasm. It catalyses the reaction tRNA(Ser) + L-serine + ATP = L-seryl-tRNA(Ser) + AMP + diphosphate + H(+). The catalysed reaction is tRNA(Sec) + L-serine + ATP = L-seryl-tRNA(Sec) + AMP + diphosphate + H(+). It participates in aminoacyl-tRNA biosynthesis; selenocysteinyl-tRNA(Sec) biosynthesis; L-seryl-tRNA(Sec) from L-serine and tRNA(Sec): step 1/1. Its function is as follows. Catalyzes the attachment of serine to tRNA(Ser). Is also able to aminoacylate tRNA(Sec) with serine, to form the misacylated tRNA L-seryl-tRNA(Sec), which will be further converted into selenocysteinyl-tRNA(Sec). The polypeptide is Serine--tRNA ligase (Clostridium botulinum (strain Alaska E43 / Type E3)).